The chain runs to 326 residues: HTH-type transcriptional regulator SyrM (326 aa).

Residues 32-89 form the HTH lysR-type domain; sequence IDLNLLVDLEALLQYRHITQAAQHVGRSQPAMSRALSRLRGMLKDDLLVAGSRGLVLT. Residues 49–68 constitute a DNA-binding region (H-T-H motif); the sequence is ITQAAQHVGRSQPAMSRALS.

This sequence belongs to the LysR transcriptional regulatory family.

In terms of biological role, acts in trans to stimulate nod gene expression via nodD3 and exo gene expression via SyrA. This is HTH-type transcriptional regulator SyrM (syrM) from Rhizobium meliloti (strain 1021) (Ensifer meliloti).